The sequence spans 473 residues: Pyruvate kinase (473 aa).

Residue arginine 32 participates in substrate binding. 4 residues coordinate K(+): asparagine 34, serine 36, aspartate 66, and threonine 67. 34 to 37 is a binding site for ATP; sequence NFSH. ATP contacts are provided by arginine 73 and lysine 155. Mg(2+) is bound at residue glutamate 221. Substrate is bound by residues glycine 244, aspartate 245, and threonine 277. Aspartate 245 provides a ligand contact to Mg(2+).

This sequence belongs to the pyruvate kinase family. Homotetramer. Requires Mg(2+) as cofactor. The cofactor is K(+).

It carries out the reaction pyruvate + ATP = phosphoenolpyruvate + ADP + H(+). The protein operates within carbohydrate degradation; glycolysis; pyruvate from D-glyceraldehyde 3-phosphate: step 5/5. This Clostridium acetobutylicum (strain ATCC 824 / DSM 792 / JCM 1419 / IAM 19013 / LMG 5710 / NBRC 13948 / NRRL B-527 / VKM B-1787 / 2291 / W) protein is Pyruvate kinase (pyk).